Here is a 432-residue protein sequence, read N- to C-terminus: tRNA(Ile)-lysidine synthase (432 aa).

An ATP-binding site is contributed by 19–24 (STGIDS).

The protein belongs to the tRNA(Ile)-lysidine synthase family.

Its subcellular location is the cytoplasm. The enzyme catalyses cytidine(34) in tRNA(Ile2) + L-lysine + ATP = lysidine(34) in tRNA(Ile2) + AMP + diphosphate + H(+). In terms of biological role, ligates lysine onto the cytidine present at position 34 of the AUA codon-specific tRNA(Ile) that contains the anticodon CAU, in an ATP-dependent manner. Cytidine is converted to lysidine, thus changing the amino acid specificity of the tRNA from methionine to isoleucine. This is tRNA(Ile)-lysidine synthase from Staphylococcus epidermidis (strain ATCC 35984 / DSM 28319 / BCRC 17069 / CCUG 31568 / BM 3577 / RP62A).